The chain runs to 263 residues: Versicolorin reductase 1 (263 aa).

Residues isoleucine 22, aspartate 68, asparagine 95, and arginine 128 each contribute to the NADP(+) site. Residues serine 144 and serine 145 each act as proton donor in the active site. NADP(+) contacts are provided by tyrosine 159, lysine 163, isoleucine 192, and threonine 194. Catalysis depends on tyrosine 159, which acts as the Proton acceptor. Lysine 163 serves as the catalytic Lowers pKa of active site Tyr.

This sequence belongs to the short-chain dehydrogenases/reductases (SDR) family.

It localises to the cytoplasm. The protein localises to the cytosol. It participates in mycotoxin biosynthesis. Versicolorin reductase; part of the fragmented gene cluster that mediates the biosynthesis of dothistromin (DOTH), a polyketide toxin very similar in structure to the aflatoxin precursor, versicolorin B. The first step of the pathway is the conversion of acetate to norsolorinic acid (NOR) and requires the fatty acid synthase subunits hexA and hexB, as well as the polyketide synthase pksA. PksA combines a hexanoyl starter unit and 7 malonyl-CoA extender units to synthesize the precursor NOR. The hexanoyl starter unit is provided to the acyl-carrier protein (ACP) domain by the fungal fatty acid synthase hexA/hexB. The second step is the conversion of NOR to averantin (AVN) and requires the norsolorinic acid ketoreductase nor1, which catalyzes the dehydration of norsolorinic acid to form (1'S)-averantin. The cytochrome P450 monooxygenase avnA then catalyzes the hydroxylation of AVN to 5'hydroxyaverantin (HAVN). The next step is performed by adhA that transforms HAVN to averufin (AVF). Averufin might then be converted to hydroxyversicolorone by cypX and avfA. Hydroxyversicolorone is further converted versiconal hemiacetal acetate (VHA) by moxY. VHA is then the substrate for the versiconal hemiacetal acetate esterase est1 to yield versiconal (VAL). Versicolorin B synthase vbsA then converts VAL to versicolorin B (VERB) by closing the bisfuran ring. Then, the activity of the versicolorin B desaturase verB leads to versicolorin A (VERA). DotB, a predicted chloroperoxidase, may perform epoxidation of the A-ring of VERA. Alternatively, a cytochrome P450, such as cypX or avnA could catalyze this step. It is also possible that another, uncharacterized, cytochrome P450 enzyme is responsible for this step. Opening of the epoxide could potentially be achieved by the epoxide hydrolase epoA. However, epoA seems not to be required for DOTH biosynthesis, but other epoxide hydrolases may have the ability to complement this hydrolysis. Alternatively, opening of the epoxide ring could be achieved non-enzymatically. The next step is the deoxygenation of ring A to yield the 5,8-dihydroxyanthraquinone which is most likely catalyzed by the NADPH dehydrogenase encoded by ver1. The last stages of DOTH biosynthesis are proposed to involve hydroxylation of the bisfuran. OrdB and norB might have oxidative roles here. An alternative possibility is that cytochrome P450 monoogenases such as avnA and cypX might perform these steps in addition to previously proposed steps. This is Versicolorin reductase 1 from Dothistroma septosporum (Red band needle blight fungus).